We begin with the raw amino-acid sequence, 276 residues long: Large ribosomal subunit protein uL2c (276 aa).

The segment at 225–276 (AMNPVDHPHGGGEGRTPIGRKKPVTPWGYSALGKKSRKRNRYSDASILRRRE) is disordered.

The protein belongs to the universal ribosomal protein uL2 family. As to quaternary structure, part of the 50S ribosomal subunit.

The protein localises to the plastid. The protein resides in the chloroplast. The sequence is that of Large ribosomal subunit protein uL2c (rpl2) from Pinus thunbergii (Japanese black pine).